We begin with the raw amino-acid sequence, 815 residues long: Protein SEY1 homolog (815 aa).

Residues 1–737 (MRQIIDYDCN…IQSTGRQPQN (737 aa)) are Cytoplasmic-facing. A GB1/RHD3-type G domain is found at 28-260 (TLGFNVISIL…LPKDYTRRIP (233 aa)). 38–45 (GCQSTGKS) is a GTP binding site. Residues 298-321 (AKDDILDGYKKSIKDLQKKMEKRE) are a coiled coil. A helical membrane pass occupies residues 738-758 (IPWWIYLLIIILGFDEITYVL). Residues 759–761 (TSP) are Lumenal-facing. A helical membrane pass occupies residues 762 to 782 (VLVTLLLLLASFIYSYLTGNF). The Cytoplasmic portion of the chain corresponds to 783-815 (SSFCNYSQQFVIISTKILHYISGAIHSSLDNRK).

The protein belongs to the TRAFAC class dynamin-like GTPase superfamily. GB1/RHD3 GTPase family. RHD3 subfamily.

The protein resides in the endoplasmic reticulum membrane. Its function is as follows. Probable GTP-binding protein that may be involved in cell development. The chain is Protein SEY1 homolog from Cryptosporidium hominis.